Consider the following 213-residue polypeptide: Imidazole glycerol phosphate synthase subunit HisH (213 aa).

One can recognise a Glutamine amidotransferase type-1 domain in the interval 8–213; it reads TVALIDYGAG…FLSRFLDWNP (206 aa). Residue Cys91 is the Nucleophile of the active site. Catalysis depends on residues His193 and Glu195.

As to quaternary structure, heterodimer of HisH and HisF.

The protein localises to the cytoplasm. The catalysed reaction is 5-[(5-phospho-1-deoxy-D-ribulos-1-ylimino)methylamino]-1-(5-phospho-beta-D-ribosyl)imidazole-4-carboxamide + L-glutamine = D-erythro-1-(imidazol-4-yl)glycerol 3-phosphate + 5-amino-1-(5-phospho-beta-D-ribosyl)imidazole-4-carboxamide + L-glutamate + H(+). It catalyses the reaction L-glutamine + H2O = L-glutamate + NH4(+). The protein operates within amino-acid biosynthesis; L-histidine biosynthesis; L-histidine from 5-phospho-alpha-D-ribose 1-diphosphate: step 5/9. Functionally, IGPS catalyzes the conversion of PRFAR and glutamine to IGP, AICAR and glutamate. The HisH subunit catalyzes the hydrolysis of glutamine to glutamate and ammonia as part of the synthesis of IGP and AICAR. The resulting ammonia molecule is channeled to the active site of HisF. This Zymomonas mobilis subsp. mobilis (strain ATCC 31821 / ZM4 / CP4) protein is Imidazole glycerol phosphate synthase subunit HisH.